A 420-amino-acid chain; its full sequence is Glucose-1-phosphate adenylyltransferase (420 aa).

Alpha-D-glucose 1-phosphate contacts are provided by residues Tyr-107, Gly-173, Glu-188 to Lys-189, and Ser-206.

This sequence belongs to the bacterial/plant glucose-1-phosphate adenylyltransferase family. In terms of assembly, homotetramer.

It carries out the reaction alpha-D-glucose 1-phosphate + ATP + H(+) = ADP-alpha-D-glucose + diphosphate. The protein operates within glycan biosynthesis; glycogen biosynthesis. Involved in the biosynthesis of ADP-glucose, a building block required for the elongation reactions to produce glycogen. Catalyzes the reaction between ATP and alpha-D-glucose 1-phosphate (G1P) to produce pyrophosphate and ADP-Glc. The protein is Glucose-1-phosphate adenylyltransferase of Shewanella sp. (strain MR-4).